A 255-amino-acid chain; its full sequence is L-erythrulose-1-phosphate isomerase (255 aa).

His-98 functions as the Electrophile in the catalytic mechanism. Glu-171 functions as the Proton acceptor in the catalytic mechanism. Substrate contacts are provided by Gly-177 and Ser-214.

It belongs to the triosephosphate isomerase family. As to quaternary structure, homodimer.

The protein resides in the cytoplasm. The catalysed reaction is L-erythrulose 1-phosphate = D-erythrulose 4-phosphate. It participates in carbohydrate metabolism; erythritol degradation. Catalyzes the isomerization of D-erythrulose-4P to L-erythrulose-1P. This chain is L-erythrulose-1-phosphate isomerase, found in Rhizobium meliloti (strain 1021) (Ensifer meliloti).